Here is a 299-residue protein sequence, read N- to C-terminus: Protoheme IX farnesyltransferase 1 (299 aa).

9 consecutive transmembrane segments (helical) span residues valine 24–proline 44, alanine 46–valine 66, leucine 97–alanine 117, leucine 118–leucine 138, isoleucine 146–glycine 166, alanine 170–leucine 190, leucine 217–glycine 237, alanine 239–valine 259, and isoleucine 278–leucine 298.

It belongs to the UbiA prenyltransferase family. Protoheme IX farnesyltransferase subfamily.

Its subcellular location is the cell inner membrane. It carries out the reaction heme b + (2E,6E)-farnesyl diphosphate + H2O = Fe(II)-heme o + diphosphate. It functions in the pathway porphyrin-containing compound metabolism; heme O biosynthesis; heme O from protoheme: step 1/1. Converts heme B (protoheme IX) to heme O by substitution of the vinyl group on carbon 2 of heme B porphyrin ring with a hydroxyethyl farnesyl side group. This Chromobacterium violaceum (strain ATCC 12472 / DSM 30191 / JCM 1249 / CCUG 213 / NBRC 12614 / NCIMB 9131 / NCTC 9757 / MK) protein is Protoheme IX farnesyltransferase 1.